A 414-amino-acid chain; its full sequence is Glutamyl-tRNA reductase (414 aa).

Residues 51 to 54, S107, 112 to 114, and Q118 contribute to the substrate site; these read TCNR and EYE. C52 acts as the Nucleophile in catalysis. 187–192 lines the NADP(+) pocket; the sequence is GAGEIG.

Belongs to the glutamyl-tRNA reductase family. In terms of assembly, homodimer.

It carries out the reaction (S)-4-amino-5-oxopentanoate + tRNA(Glu) + NADP(+) = L-glutamyl-tRNA(Glu) + NADPH + H(+). It participates in porphyrin-containing compound metabolism; protoporphyrin-IX biosynthesis; 5-aminolevulinate from L-glutamyl-tRNA(Glu): step 1/2. In terms of biological role, catalyzes the NADPH-dependent reduction of glutamyl-tRNA(Glu) to glutamate 1-semialdehyde (GSA). This is Glutamyl-tRNA reductase from Sulfolobus acidocaldarius (strain ATCC 33909 / DSM 639 / JCM 8929 / NBRC 15157 / NCIMB 11770).